The chain runs to 399 residues: S-adenosylmethionine synthase (399 aa).

Position 17 (H17) interacts with ATP. D19 is a binding site for Mg(2+). E45 is a binding site for K(+). Residues E58 and Q101 each coordinate L-methionine. Residues 101–111 (QSPDIAQGVDK) are flexible loop. ATP-binding positions include 176 to 178 (DGK), 243 to 244 (RF), D252, 258 to 259 (RK), and K279. D252 contributes to the L-methionine binding site. K283 is an L-methionine binding site.

The protein belongs to the AdoMet synthase family. In terms of assembly, homotetramer; dimer of dimers. Mg(2+) serves as cofactor. It depends on K(+) as a cofactor.

It localises to the cytoplasm. It carries out the reaction L-methionine + ATP + H2O = S-adenosyl-L-methionine + phosphate + diphosphate. Its pathway is amino-acid biosynthesis; S-adenosyl-L-methionine biosynthesis; S-adenosyl-L-methionine from L-methionine: step 1/1. In terms of biological role, catalyzes the formation of S-adenosylmethionine (AdoMet) from methionine and ATP. The overall synthetic reaction is composed of two sequential steps, AdoMet formation and the subsequent tripolyphosphate hydrolysis which occurs prior to release of AdoMet from the enzyme. The chain is S-adenosylmethionine synthase from Staphylococcus epidermidis (strain ATCC 35984 / DSM 28319 / BCRC 17069 / CCUG 31568 / BM 3577 / RP62A).